We begin with the raw amino-acid sequence, 461 residues long: Fumarate hydratase class II (461 aa).

Residues 99-101 (SGT), R127, 130-133 (HPND), 140-142 (SSN), and T188 each bind substrate. Catalysis depends on H189, which acts as the Proton donor/acceptor. S319 is an active-site residue. Substrate contacts are provided by residues S320 and 325–327 (KVN).

It belongs to the class-II fumarase/aspartase family. Fumarase subfamily. In terms of assembly, homotetramer.

The protein resides in the cytoplasm. The enzyme catalyses (S)-malate = fumarate + H2O. Its pathway is carbohydrate metabolism; tricarboxylic acid cycle; (S)-malate from fumarate: step 1/1. Functionally, involved in the TCA cycle. Catalyzes the stereospecific interconversion of fumarate to L-malate. The protein is Fumarate hydratase class II of Chromobacterium violaceum (strain ATCC 12472 / DSM 30191 / JCM 1249 / CCUG 213 / NBRC 12614 / NCIMB 9131 / NCTC 9757 / MK).